Here is a 356-residue protein sequence, read N- to C-terminus: Nicotinate-nucleotide--dimethylbenzimidazole phosphoribosyltransferase (356 aa).

E317 serves as the catalytic Proton acceptor.

It belongs to the CobT family. As to quaternary structure, homodimer.

The enzyme catalyses 5,6-dimethylbenzimidazole + nicotinate beta-D-ribonucleotide = alpha-ribazole 5'-phosphate + nicotinate + H(+). It functions in the pathway nucleoside biosynthesis; alpha-ribazole biosynthesis; alpha-ribazole from 5,6-dimethylbenzimidazole: step 1/2. Catalyzes the synthesis of alpha-ribazole-5'-phosphate from nicotinate mononucleotide (NAMN) and 5,6-dimethylbenzimidazole (DMB). The sequence is that of Nicotinate-nucleotide--dimethylbenzimidazole phosphoribosyltransferase from Salmonella typhi.